Here is a 97-residue protein sequence, read N- to C-terminus: Large ribosomal subunit protein eL21 (97 aa).

The disordered stretch occupies residues 1–24; the sequence is MQKSEGFRSKTRYKLQKHPRQKGM. Positions 9-21 are enriched in basic residues; it reads SKTRYKLQKHPRQ.

It belongs to the eukaryotic ribosomal protein eL21 family.

In Methanococcus maripaludis (strain DSM 14266 / JCM 13030 / NBRC 101832 / S2 / LL), this protein is Large ribosomal subunit protein eL21.